The following is a 255-amino-acid chain: Cullin-like protein 3 (255 aa).

It belongs to the cullin family.

The chain is Cullin-like protein 3 from Arabidopsis thaliana (Mouse-ear cress).